The following is a 366-amino-acid chain: UDP-N-acetylglucosamine 2-epimerase (366 aa).

His206 is an active-site residue.

The protein belongs to the UDP-N-acetylglucosamine 2-epimerase family. Homodimer.

It is found in the cytoplasm. It catalyses the reaction UDP-N-acetyl-alpha-D-glucosamine = UDP-N-acetyl-alpha-D-mannosamine. In terms of biological role, catalyzes the reversible epimerization at C-2 of UDP-N-acetylglucosamine (UDP-GlcNAc) to produce UDP-N-acetylmannosamine (UDP-ManNAc), the activated donor of ManNAc residues. This is UDP-N-acetylglucosamine 2-epimerase (wecB) from Methanococcus maripaludis (strain DSM 14266 / JCM 13030 / NBRC 101832 / S2 / LL).